A 388-amino-acid chain; its full sequence is MKRNFPKLIALSLIFSLSITPIANAESNSNIKAKDKRHVQVNVEDKSVPTDVRNLAQKDYLSYVTSLDKIYNKEKASYTLGEPFKIYKFNKKSDGNYYFPVLNTEGNIDYIVTISPKVTKDSSSSSKYTINVSSFLSKALNEYKDQQITILTNSKGYYVVTQNHKAKLVLKTPRLEDKKAKKTESIPTGNNVTQLKQKASVTMPTSQFKSNNYTYNEQYVNKLENFKIRETQGNNGWCAGYTMSALLNATYNTNKYHAEAVMRFLHPNLQGQQFQFTGLTPREMIYFEQTQGRSPQLLNRMTTYNEVDNLTKNNKGIAILGSRVESRNGMHAGHAMAVVGNAKLNNGQEVIIIWNPWDNGFMTQDAKNNVIPVSNGDHYQWYSSIYGY.

Positions 1 to 25 (MKRNFPKLIALSLIFSLSITPIANA) are cleaved as a signal peptide. A propeptide spanning residues 26–214 (ESNSNIKAKD…TSQFKSNNYT (189 aa)) is cleaved from the precursor. Residues cysteine 238, histidine 334, and asparagine 355 contribute to the active site.

The protein belongs to the peptidase C47 family. In the cytoplasm, prematurely activated/folded ScpA forms a stable non-covalent complex with ScpB. Post-translationally, cleavage leads to the activation of ScpA probably by an auto-catalytic manner.

It localises to the secreted. The catalysed reaction is Broad endopeptidase action on proteins including elastin, but rather limited hydrolysis of small-molecule substrates. Assays are conveniently made with hemoglobin, casein or Z-Phe-Arg-NHMec as substrate.. With respect to regulation, prematurely activated/folded staphopain A is inhibited by staphostatin A (ScpB), which is probably required to protect staphylococcal cytoplasmic proteins from degradation by ScpA. Also inactivated by heavy metal ions such as Hg(2+) or Ag(+), iodoacetamide, E-64 and human plasma. Cysteine protease that plays an important role in the inhibition of host innate immune response. Cleaves host elastins found in connective tissues, pulmonary surfactant protein A in the lungs, and the chemokine receptor CXCR2 on leukocytes. Proteolytic cleavage of surfactant protein A impairs bacterial phagocytosis by neutrophils while CXCR2 degradation blocks neutrophil activation and chemotaxis. Additionally, promotes vascular leakage by activating the plasma kallikerin/kinin system, resulting in hypotension. The sequence is that of Staphopain A (sspP) from Staphylococcus aureus.